Consider the following 444-residue polypeptide: UDP-N-acetylmuramoylalanine--D-glutamate ligase (444 aa).

Residue 113–119 (GSNGKST) participates in ATP binding.

It belongs to the MurCDEF family.

The protein localises to the cytoplasm. It catalyses the reaction UDP-N-acetyl-alpha-D-muramoyl-L-alanine + D-glutamate + ATP = UDP-N-acetyl-alpha-D-muramoyl-L-alanyl-D-glutamate + ADP + phosphate + H(+). It participates in cell wall biogenesis; peptidoglycan biosynthesis. In terms of biological role, cell wall formation. Catalyzes the addition of glutamate to the nucleotide precursor UDP-N-acetylmuramoyl-L-alanine (UMA). The protein is UDP-N-acetylmuramoylalanine--D-glutamate ligase of Blochmanniella floridana.